The primary structure comprises 252 residues: Autophagy-related protein 27 (252 aa).

An N-terminal signal peptide occupies residues 1-15 (MILASLLTFATAALA). In terms of domain architecture, MRH spans 16–161 (FDCSDKELER…SMKTKAACIT (146 aa)). The Lumenal portion of the chain corresponds to 16-176 (FDCSDKELER…KKEKHDNGES (161 aa)). Intrachain disulfides connect Cys18/Cys57, Cys66/Cys73, and Cys130/Cys159. N-linked (GlcNAc...) asparagine glycosylation occurs at Asn49. Residues 177–197 (WGWFTWIFIFLVLFLSIYIIG) traverse the membrane as a helical segment. At 198–252 (GAWFQYNKGNAIDFQSALKEVVENFIELLKGLPSFGKEIIEKFTGRSNRGEYSAV) the chain is on the cytoplasmic side.

This sequence belongs to the ATG27 family.

Its subcellular location is the cytoplasmic vesicle membrane. It localises to the golgi apparatus membrane. It is found in the mitochondrion membrane. The protein resides in the preautophagosomal structure membrane. Functionally, plays a key role in autophagy. Effector of VPS34 phosphatidylinositol 3-phosphate kinase signaling. Regulates the cytoplasm to vacuole transport (Cvt) vesicle formation. Plays a role in ATG protein retrieval from the pre-autophagosomal structure (PAS) and is especially required for autophagy-dependent cycling of ATG9. Finally, plays an important role in biofilm formation and resistance to antifungal compounds such as fluconazole, itraconazole, terbinafine and caspofungin. In Candida albicans (strain SC5314 / ATCC MYA-2876) (Yeast), this protein is Autophagy-related protein 27.